Here is a 488-residue protein sequence, read N- to C-terminus: Katanin p60 ATPase-containing subunit A-like 1 (488 aa).

At Met-1 the chain carries N-acetylmethionine. Residues Asp-95–Phe-179 form a disordered region. Basic and acidic residues predominate over residues Pro-116–Val-127. Low complexity predominate over residues Gly-128–Ala-138. Over residues Ser-142 to Val-167 the composition is skewed to basic and acidic residues. Residue Ser-172 is modified to Phosphoserine. Gly-246–Thr-253 is a binding site for ATP.

The protein belongs to the AAA ATPase family. Katanin p60 subunit A1 subfamily. A-like 1 sub-subfamily. As to quaternary structure, interacts with KATNB1 and KATNBL1. Widely expressed, including in testis, brain, heart, lung, kidney, liver, spleen, seminal vesicles and ovary. In testis, restricted to Sertoli cells within the seminiferous epithelium (at protein level).

Its subcellular location is the cytoplasm. It is found in the cytoskeleton. It localises to the spindle pole. The protein localises to the spindle. It carries out the reaction n ATP + n H2O + a microtubule = n ADP + n phosphate + (n+1) alpha/beta tubulin heterodimers.. In terms of biological role, regulates microtubule dynamics in Sertoli cells, a process that is essential for spermiogenesis and male fertility. Severs microtubules in an ATP-dependent manner, promoting rapid reorganization of cellular microtubule arrays. Has microtubule-severing activity in vitro. In Mus musculus (Mouse), this protein is Katanin p60 ATPase-containing subunit A-like 1 (Katnal1).